Here is a 65-residue protein sequence, read N- to C-terminus: Photosystem II reaction center protein J (65 aa).

Residues 35–55 form a helical membrane-spanning segment; the sequence is LWLVATAGGTAVIFVLGIFFY.

The protein belongs to the PsbJ family. PSII is composed of 1 copy each of membrane proteins PsbA, PsbB, PsbC, PsbD, PsbE, PsbF, PsbH, PsbI, PsbJ, PsbK, PsbL, PsbM, PsbT, PsbX, PsbY, Psb30/Ycf12, peripheral proteins PsbO, CyanoQ (PsbQ), PsbU, PsbV and a large number of cofactors. It forms dimeric complexes.

It localises to the cellular thylakoid membrane. Functionally, one of the components of the core complex of photosystem II (PSII). PSII is a light-driven water:plastoquinone oxidoreductase that uses light energy to abstract electrons from H(2)O, generating O(2) and a proton gradient subsequently used for ATP formation. It consists of a core antenna complex that captures photons, and an electron transfer chain that converts photonic excitation into a charge separation. The sequence is that of Photosystem II reaction center protein J from Prochlorococcus marinus (strain NATL1A).